A 385-amino-acid polypeptide reads, in one-letter code: Branched-chain-amino-acid aminotransferase, cytosolic (385 aa).

At Lys-221 the chain carries N6-(pyridoxal phosphate)lysine.

It belongs to the class-IV pyridoxal-phosphate-dependent aminotransferase family. Homodimer. It depends on pyridoxal 5'-phosphate as a cofactor. Expressed in muscles.

It localises to the cytoplasm. It carries out the reaction L-leucine + 2-oxoglutarate = 4-methyl-2-oxopentanoate + L-glutamate. It catalyses the reaction L-isoleucine + 2-oxoglutarate = (S)-3-methyl-2-oxopentanoate + L-glutamate. The catalysed reaction is L-valine + 2-oxoglutarate = 3-methyl-2-oxobutanoate + L-glutamate. Functionally, catalyzes the first reaction in the catabolism of the essential branched chain amino acids leucine, isoleucine, and valine. This is Branched-chain-amino-acid aminotransferase, cytosolic (BCAT1) from Ovis aries (Sheep).